A 360-amino-acid polypeptide reads, in one-letter code: Chorismate synthase (360 aa).

NADP(+)-binding residues include arginine 48 and arginine 54. Residues 125 to 127 (RSS), 246 to 247 (NA), glycine 286, 301 to 305 (KPTSS), and arginine 327 contribute to the FMN site.

It belongs to the chorismate synthase family. As to quaternary structure, homotetramer. FMNH2 serves as cofactor.

The catalysed reaction is 5-O-(1-carboxyvinyl)-3-phosphoshikimate = chorismate + phosphate. It functions in the pathway metabolic intermediate biosynthesis; chorismate biosynthesis; chorismate from D-erythrose 4-phosphate and phosphoenolpyruvate: step 7/7. In terms of biological role, catalyzes the anti-1,4-elimination of the C-3 phosphate and the C-6 proR hydrogen from 5-enolpyruvylshikimate-3-phosphate (EPSP) to yield chorismate, which is the branch point compound that serves as the starting substrate for the three terminal pathways of aromatic amino acid biosynthesis. This reaction introduces a second double bond into the aromatic ring system. The protein is Chorismate synthase of Actinobacillus pleuropneumoniae serotype 7 (strain AP76).